Consider the following 295-residue polypeptide: 4-hydroxy-tetrahydrodipicolinate synthase (295 aa).

Pyruvate is bound at residue Thr-48. Tyr-135 functions as the Proton donor/acceptor in the catalytic mechanism. The Schiff-base intermediate with substrate role is filled by Lys-163. Val-204 serves as a coordination point for pyruvate.

Belongs to the DapA family. As to quaternary structure, homotetramer; dimer of dimers.

It is found in the cytoplasm. It carries out the reaction L-aspartate 4-semialdehyde + pyruvate = (2S,4S)-4-hydroxy-2,3,4,5-tetrahydrodipicolinate + H2O + H(+). It functions in the pathway amino-acid biosynthesis; L-lysine biosynthesis via DAP pathway; (S)-tetrahydrodipicolinate from L-aspartate: step 3/4. Functionally, catalyzes the condensation of (S)-aspartate-beta-semialdehyde [(S)-ASA] and pyruvate to 4-hydroxy-tetrahydrodipicolinate (HTPA). This chain is 4-hydroxy-tetrahydrodipicolinate synthase, found in Francisella tularensis subsp. novicida (strain U112).